A 439-amino-acid chain; its full sequence is Enolase 1-1 (439 aa).

Phosphothreonine is present on Thr-85. Residues His-159 and Glu-168 each contribute to the substrate site. The Proton donor role is filled by Glu-211. Asp-246 is a Mg(2+) binding site. 2 positions are modified to phosphoserine: Ser-249 and Ser-250. The residue at position 253 (Tyr-253) is a Phosphotyrosine. Substrate is bound by residues Glu-295 and Asp-320. The Mg(2+) site is built by Glu-295 and Asp-320. Catalysis depends on Lys-345, which acts as the Proton acceptor. Ser-351 bears the Phosphoserine mark. Thr-353 carries the post-translational modification Phosphothreonine. Ser-355 carries the post-translational modification Phosphoserine. Substrate-binding positions include 372–375 (SHRS) and Lys-396. A Phosphoserine modification is found at Ser-421.

The protein belongs to the enolase family. As to quaternary structure, homodimer. Requires Mg(2+) as cofactor.

Its subcellular location is the cytoplasm. It catalyses the reaction (2R)-2-phosphoglycerate = phosphoenolpyruvate + H2O. It functions in the pathway carbohydrate degradation; glycolysis; pyruvate from D-glyceraldehyde 3-phosphate: step 4/5. This chain is Enolase 1-1 (eno101), found in Schizosaccharomyces pombe (strain 972 / ATCC 24843) (Fission yeast).